The primary structure comprises 275 residues: NH(3)-dependent NAD(+) synthetase (275 aa).

Position 47–54 (47–54 (GMSGGQDS)) interacts with ATP. A Mg(2+)-binding site is contributed by aspartate 53. Residue arginine 141 participates in deamido-NAD(+) binding. Position 161 (threonine 161) interacts with ATP. Glutamate 166 contacts Mg(2+). Residues lysine 174 and aspartate 181 each coordinate deamido-NAD(+). 2 residues coordinate ATP: lysine 190 and threonine 212. 261 to 262 (HK) contacts deamido-NAD(+).

Belongs to the NAD synthetase family. Homodimer.

The catalysed reaction is deamido-NAD(+) + NH4(+) + ATP = AMP + diphosphate + NAD(+) + H(+). It functions in the pathway cofactor biosynthesis; NAD(+) biosynthesis; NAD(+) from deamido-NAD(+) (ammonia route): step 1/1. Its function is as follows. Catalyzes the ATP-dependent amidation of deamido-NAD to form NAD. Uses ammonia as a nitrogen source. The chain is NH(3)-dependent NAD(+) synthetase from Oceanobacillus iheyensis (strain DSM 14371 / CIP 107618 / JCM 11309 / KCTC 3954 / HTE831).